Consider the following 146-residue polypeptide: MDLNTLLETTVVGLGYELVDVEMSPRGRTIRVFIDAPAKETGIDVEDCAKVSNQLTRVFEVENFDFDRLEISSPGLDRVVKKAADFERFSGQEIQIKVRIPQGGRRNFQGELLGLKDGKVGLRLAKDDVELEFTNIEKARLVPRFD.

Belongs to the RimP family.

The protein localises to the cytoplasm. Its function is as follows. Required for maturation of 30S ribosomal subunits. This Dechloromonas aromatica (strain RCB) protein is Ribosome maturation factor RimP.